The following is a 173-amino-acid chain: Photosystem I assembly protein Ycf3 (173 aa).

TPR repeat units follow at residues 35–68, 72–105, and 120–153; these read AFVY…EDDA, SYIL…NPNL, and GERA…APNN.

This sequence belongs to the Ycf3 family.

It is found in the cellular thylakoid membrane. Functionally, essential for the assembly of the photosystem I (PSI) complex. May act as a chaperone-like factor to guide the assembly of the PSI subunits. The polypeptide is Photosystem I assembly protein Ycf3 (Gloeothece citriformis (strain PCC 7424) (Cyanothece sp. (strain PCC 7424))).